A 123-amino-acid chain; its full sequence is Sterol carrier protein 2 (123 aa).

The 98-residue stretch at 16–113 (KEHLSTDAGK…GSLSAAQKFT (98 aa)) folds into the SCP2 domain. A Microbody targeting signal motif is present at residues 121-123 (SKL).

Expressed in most tissues including seedlings, cotyledons, inflorescence, leaves, stems, roots, siliques and flower buds, with the highest levels in floral tissues and in maturing seeds.

It is found in the peroxisome. Enhances the transfer of lipids between membranes in vitro. Active on phosphatidylcholine (PC), 1-palmitoyl 2-oleoyl phosphatidylcholine (POPC) and ergosterol, and, to a lower extent, dimyristoyl phosphatidic acid, stigmasterol, desmosterol, beta-sitosterol and steryl glucoside. Inactive or poorly active on palmitic acid, stearoyl-coenzyme A, cholesterol, glucosylceramide and ceramide. Required during seeds and seedlings development. The protein is Sterol carrier protein 2 of Arabidopsis thaliana (Mouse-ear cress).